The sequence spans 346 residues: Biotin synthase (346 aa).

One can recognise a Radical SAM core domain in the interval 38 to 256; it reads RQVQVSTLLS…IAVARIMMPT (219 aa). 3 residues coordinate [4Fe-4S] cluster: C53, C57, and C60. Residues C97, C128, C188, and R260 each contribute to the [2Fe-2S] cluster site.

The protein belongs to the radical SAM superfamily. Biotin synthase family. Homodimer. It depends on [4Fe-4S] cluster as a cofactor. [2Fe-2S] cluster is required as a cofactor.

It carries out the reaction (4R,5S)-dethiobiotin + (sulfur carrier)-SH + 2 reduced [2Fe-2S]-[ferredoxin] + 2 S-adenosyl-L-methionine = (sulfur carrier)-H + biotin + 2 5'-deoxyadenosine + 2 L-methionine + 2 oxidized [2Fe-2S]-[ferredoxin]. The protein operates within cofactor biosynthesis; biotin biosynthesis; biotin from 7,8-diaminononanoate: step 2/2. In terms of biological role, catalyzes the conversion of dethiobiotin (DTB) to biotin by the insertion of a sulfur atom into dethiobiotin via a radical-based mechanism. This is Biotin synthase from Shigella dysenteriae serotype 1 (strain Sd197).